The chain runs to 1234 residues: Anion exchange protein 2 (1234 aa).

A disordered region spans residues 1 to 239 (MSSAPRRPAS…YNLQERRRIG (239 aa)). Residues 1 to 704 (MSSAPRRPAS…SDFRDALDPQ (704 aa)) are Cytoplasmic-facing. Composition is skewed to basic and acidic residues over residues 39 to 49 (LRTLGVERFEE) and 58 to 75 (GGEEPGRSYGEEDFEYHR). 2 stretches are compositionally biased toward basic residues: residues 76–85 (QSSHHIHHPL) and 94–110 (RRRKTPQGPGRKPRRRP). Residue serine 113 is modified to Phosphoserine. Residues 120 to 133 (TIEEGEEDEDEVGE) are compositionally biased toward acidic residues. 3 positions are modified to phosphoserine: serine 145, serine 171, and serine 173. Over residues 207-216 (TAGGDDGGAA) the composition is skewed to gly residues. Phosphoserine is present on serine 240. Threonine 254 bears the Phosphothreonine mark. The residue at position 271 (lysine 271) is an N6-methyllysine. The segment at 287–315 (RKNAKGSTQAAREGREPGPTPRARPRAPH) is disordered. Residue serine 440 is modified to Phosphoserine. The interval 446-467 (SLLGHHHAQGTESDPHVTEPLI) is disordered. The next 4 helical transmembrane spans lie at 705–728 (CLAAVIFIYFAALSPAITFGGLLG), 734–771 (LIGVSELIMSTALQGVIFCLLGAQPLLVIGFSGPLLVF), 791–813 (VWIGFWLVLLALLMVALEGSFLV), and 823–843 (IFAFLISLIFIYETFYKLIKI). A membrane (anion exchange) region spans residues 705 to 1234 (CLAAVIFIYF…DEYNEMPMPV (530 aa)). Residues 844-893 (FQEHPLHGCSVSNDSEADSSSNNMTWAATTLAPDNSSASGQERPRGQPNT) are Extracellular-facing. 3 N-linked (GlcNAc...) asparagine glycosylation sites follow: asparagine 856, asparagine 866, and asparagine 878. A helical membrane pass occupies residues 894–911 (ALLSLVLMAGTFFIAFFL). The Cytoplasmic segment spans residues 912 to 926 (RKFKNSRFFPGRIRR). 5 helical membrane passes run 927–947 (VIGDFGVPIAILIMVLVDYSI), 981–1003 (PFPVWMMVASLLPAVLVFILIFM), 1029–1050 (LLLIVAMGGICALFGLPWLAAA), 1084–1129 (VTGL…IQFY), and 1156–1192 (MHLFTALQLLCLALLWAVMSTAASLAFPFILILTVPL). The S-palmitoyl cysteine moiety is linked to residue cysteine 1166.

This sequence belongs to the anion exchanger (TC 2.A.31) family. Expressed in the parotid and submandibular glands (at protein level). Expressed in the gastric mucosa (at protein level). Expressed in the choroid plexus epithelium (at protein level). Expressed in the liver and gallbladder.

Its subcellular location is the apical cell membrane. The protein localises to the basolateral cell membrane. The catalysed reaction is hydrogencarbonate(in) + chloride(out) = hydrogencarbonate(out) + chloride(in). Its activity is regulated as follows. Inhibited by 4,4'-diisothiocyanatostilbene-2,2'-disulfonic acid (DIDS). Its function is as follows. Sodium-independent anion exchanger which mediates the electroneutral exchange of chloride for bicarbonate ions across the cell membrane. Plays an important role in osteoclast differentiation and function. Regulates bone resorption and calpain-dependent actin cytoskeleton organization in osteoclasts via anion exchange-dependent control of pH. Essential for intracellular pH regulation in CD8(+) T-cells upon CD3 stimulation, modulating CD8(+) T-cell responses. The sequence is that of Anion exchange protein 2 (Slc4a2) from Rattus norvegicus (Rat).